A 340-amino-acid chain; its full sequence is Guanine nucleotide-binding protein G(I)/G(S)/G(T) subunit beta-3 (340 aa).

WD repeat units follow at residues 53 to 83 (GHLA…IVWD), 95 to 125 (LRSS…SIYN), 141 to 170 (AHTG…ALWD), 182 to 212 (GHTG…KLWD), 224 to 254 (GHES…RLFD), 268 to 298 (SIIC…NVWD), and 310 to 340 (GHDN…KIWN).

Belongs to the WD repeat G protein beta family. G proteins are composed of 3 units, alpha, beta and gamma. Interacts with RASD2.

Functionally, guanine nucleotide-binding proteins (G proteins) are involved as a modulator or transducer in various transmembrane signaling systems. The beta and gamma chains are required for the GTPase activity, for replacement of GDP by GTP, and for G protein-effector interaction. The sequence is that of Guanine nucleotide-binding protein G(I)/G(S)/G(T) subunit beta-3 (Gnb3) from Mus musculus (Mouse).